Reading from the N-terminus, the 772-residue chain is C-Maf-inducing protein (772 aa).

The 109-residue stretch at 52–160 (KLLQEGDIQV…WFHSLQWKKK (109 aa)) folds into the PH domain. 4 LRR repeats span residues 662-683 (NLEN…QLIK), 686-706 (SLKQ…RVLS), 711-731 (TLQV…LALS), and 735-755 (SLCN…EDLK).

It is found in the nucleus. The protein localises to the cytoplasm. Its function is as follows. Plays a role in T-cell signaling pathway. The chain is C-Maf-inducing protein (cmip) from Xenopus laevis (African clawed frog).